The primary structure comprises 385 residues: MKDVILIANAGSSSLKISIFEIQNKKVKDKIYNIFLEKNVNKILFHINKKQESATDIKDDAIEMMIDLFEDWWKKQENLNLIATGHRIVHGGKNFNKPVIVYEKVSKDLTVLIPLSPLHQPYNLQVLDLFLQKYKEISHIACFDTSFHFTNPPITKAFGLPKKYYDKGIIRYGFHGLSYKYVSSHFKEMTKEDLPTKTIIAHLGSGSSLCAIKNGLSLTSSMGFSVLDGVMMGTRTGNLDPGVVLYLIDHEKMTTKEVTELLYKKSGLLGMSGESSDMRTLLASNSPDAKFAIDLFVYRIVLEIGKLTAALEGVDCLIFTAGVGQNSAVIRKMITEKLLWLGIKIDDTKNQKNEHLISTSDSKVKVFAVPTNEELIIAEEVMKFL.

Asparagine 9 serves as a coordination point for Mg(2+). ATP is bound at residue lysine 16. A substrate-binding site is contributed by arginine 87. Aspartate 144 functions as the Proton donor/acceptor in the catalytic mechanism. Residues 202–206 and 277–279 each bind ATP; these read HLGSG and DMR. Glutamate 373 serves as a coordination point for Mg(2+).

Belongs to the acetokinase family. In terms of assembly, homodimer. Mg(2+) is required as a cofactor. It depends on Mn(2+) as a cofactor.

It localises to the cytoplasm. It catalyses the reaction acetate + ATP = acetyl phosphate + ADP. It participates in metabolic intermediate biosynthesis; acetyl-CoA biosynthesis; acetyl-CoA from acetate: step 1/2. Catalyzes the formation of acetyl phosphate from acetate and ATP. Can also catalyze the reverse reaction. The sequence is that of Acetate kinase from Rickettsia felis (strain ATCC VR-1525 / URRWXCal2) (Rickettsia azadi).